A 117-amino-acid polypeptide reads, in one-letter code: Huntingtin-interacting protein M (117 aa).

Composition is skewed to basic and acidic residues over residues 1–11 (MSEKKSQEKPC) and 83–97 (QDRE…EPSR). 2 disordered regions span residues 1 to 25 (MSEK…SRPE) and 74 to 117 (NINN…RRNG).

May interact with the N-terminus of HD.

The polypeptide is Huntingtin-interacting protein M (Mus musculus (Mouse)).